A 215-amino-acid polypeptide reads, in one-letter code: Pyrrolidone-carboxylate peptidase (215 aa).

Active-site residues include E78, C141, and H165.

This sequence belongs to the peptidase C15 family. As to quaternary structure, homotetramer.

Its subcellular location is the cytoplasm. The enzyme catalyses Release of an N-terminal pyroglutamyl group from a polypeptide, the second amino acid generally not being Pro.. In terms of biological role, removes 5-oxoproline from various penultimate amino acid residues except L-proline. The chain is Pyrrolidone-carboxylate peptidase from Lactobacillus johnsonii (strain CNCM I-12250 / La1 / NCC 533).